The primary structure comprises 229 residues: Protein ras-2 (229 aa).

Gly-15 to Thr-22 contributes to the GTP binding site. The Effector region motif lies at Tyr-37–Tyr-45. Residue Asp-62–Gln-66 participates in GTP binding. Residues Lys-109–Pro-132 are disordered. Residues Ser-111–Ala-126 are compositionally biased toward low complexity. Asn-140–Asp-143 is a GTP binding site. Positions Leu-188 to Ile-229 are disordered. A compositionally biased stretch (basic and acidic residues) spans Lys-209–Pro-219. Residues Lys-220–Ile-229 are compositionally biased toward basic residues. Position 226 is a cysteine methyl ester (Cys-226). A lipid anchor (S-farnesyl cysteine) is attached at Cys-226. A propeptide spans Leu-227–Ile-229 (removed in mature form).

This sequence belongs to the small GTPase superfamily. Ras family.

The protein localises to the cell membrane. The enzyme catalyses GTP + H2O = GDP + phosphate + H(+). Its function is as follows. Ras proteins bind GDP/GTP and possess intrinsic GTPase activity. The chain is Protein ras-2 (ras-2) from Neurospora crassa (strain ATCC 24698 / 74-OR23-1A / CBS 708.71 / DSM 1257 / FGSC 987).